The sequence spans 116 residues: uncharacterized protein (116 aa).

The signal sequence occupies residues 1 to 19; the sequence is MRWDVIILYAISRPYATRR. Residues 18-50 are disordered; that stretch reads RRTGSHTHPRDSRYIAANQRRPPSACRVGPSPA.

This is an uncharacterized protein from Saccharomyces cerevisiae (strain ATCC 204508 / S288c) (Baker's yeast).